Here is a 313-residue protein sequence, read N- to C-terminus: Fucose-specific lectin (313 aa).

Repeat copies occupy residues 5 to 57 (FLYT…VIGE), 58 to 109 (AKLF…VGVK), 110 to 162 (VGSN…SFGS), 163 to 208 (TVPG…FSAS), 209 to 260 (ASAG…RPTP), and 261 to 304 (SLPD…IGAV). The tract at residues 5–304 (FLYTSKIAAI…SGKGWSIGAV (300 aa)) is 6 X approximate tandem repeats. Beta-L-fucose is bound by residues R25, E37, R78, E90, W98, Q102, R132, E147, and W154. Residues R78 and E90 each contribute to the alpha-L-fucose site. Q102 contributes to the alpha-L-fucose binding site. W154, R180, and E192 together coordinate alpha-L-fucose. W200 is a beta-L-fucose binding site. Alpha-L-fucose is bound at residue G204. 2 residues coordinate beta-L-fucose: R227 and E239. Position 246 (W246) interacts with alpha-L-fucose. A beta-L-fucose-binding site is contributed by W299.

Belongs to the fungal fucose-specific lectin family. As to quaternary structure, forms homodimers. The two AAL monomers are associated via interactions between N-terminal and C-terminal peptides. Tyr-7 interacts via aromatic ring stacking with its counterpart on the other monomer, whereas Ser-284 interacts via hydrogen bonding with Asp-264 on the other monomer.

In terms of biological role, lectin that specifically binds to L-fucose. Has strongest preference for the alpha-1,6-fucosylated chain (core fucose) on glycoproteins among alpha-1,2-, alpha-1,3-, alpha-1,4-, and alpha-1,6-fucosylated chains. Might play a role in the differentiation of the fruiting body. Exhibits antifungal activity against Mucor racemosus and thus could act as an antifungal protein in natural ecosystems. This is Fucose-specific lectin from Aleuria aurantia (Orange peel mushroom).